We begin with the raw amino-acid sequence, 183 residues long: MDIDPYKEFGATVELLSFLPSDFFPSVRDLLDTASALYREALESPEHCSPNHTALRQAILCWGELMTLASWVGNNLEDPASREQVVNYVNTNMGLKIRQLLWFHISCLTFGRETVLEYLVSFGVWIRTPPAYRPPNAPILSTLPETAVVRRRGRSPRRRTPSPRRRRSQSPRRRRSQSPASQC.

Residues 143-183 are disordered; the sequence is LPETAVVRRRGRSPRRRTPSPRRRRSQSPRRRRSQSPASQC. A compositionally biased stretch (basic residues) spans 149-176; sequence VRRRGRSPRRRTPSPRRRRSQSPRRRRS. Residues serine 155, serine 162, and serine 170 each carry the phosphoserine; by host modification. One copy of the 1; half-length repeat lies at 155–161; the sequence is SPRRRTP. The 3 X 8 AA repeats of S-P-R-R-R-[PR]-S-Q stretch occupies residues 155–177; sequence SPRRRTPSPRRRRSQSPRRRRSQ. The Bipartite nuclear localization signal signature appears at 158–175; it reads RRTPSPRRRRSQSPRRRR. 2 tandem repeats follow at residues 162–169 and 170–177. The segment at 177 to 183 is RNA binding; it reads QSPASQC.

The protein belongs to the orthohepadnavirus core antigen family. As to quaternary structure, homodimerizes, then multimerizes. Interacts with cytosol exposed regions of viral L glycoprotein present in the reticulum-to-Golgi compartment. Interacts with human FLNB. Phosphorylated form interacts with host importin alpha; this interaction depends on the exposure of the NLS, which itself depends upon genome maturation and/or phosphorylation of the capsid protein. Interacts with host NUP153. Phosphorylated by host SRPK1, SRPK2, and maybe protein kinase C or GAPDH. Phosphorylation is critical for pregenomic RNA packaging. Protein kinase C phosphorylation is stimulated by HBx protein and may play a role in transport of the viral genome to the nucleus at the late step during the viral replication cycle.

It is found in the virion. The protein localises to the host cytoplasm. In terms of biological role, self assembles to form an icosahedral capsid. Most capsids appear to be large particles with an icosahedral symmetry of T=4 and consist of 240 copies of capsid protein, though a fraction forms smaller T=3 particles consisting of 180 capsid proteins. Entering capsids are transported along microtubules to the nucleus. Phosphorylation of the capsid is thought to induce exposure of nuclear localization signal in the C-terminal portion of the capsid protein that allows binding to the nuclear pore complex via the importin (karyopherin-) alpha and beta. Capsids are imported in intact form through the nuclear pore into the nuclear basket, where it probably binds NUP153. Only capsids that contain the mature viral genome can release the viral DNA and capsid protein into the nucleoplasm. Immature capsids get stuck in the basket. Capsids encapsulate the pre-genomic RNA and the P protein. Pre-genomic RNA is reverse-transcribed into DNA while the capsid is still in the cytoplasm. The capsid can then either be directed to the nucleus, providing more genomes for transcription, or bud through the endoplasmic reticulum to provide new virions. The polypeptide is Capsid protein (Gorilla gorilla (western gorilla)).